The sequence spans 295 residues: Pyridoxal 5'-phosphate synthase subunit PdxS (295 aa).

D25 contacts D-ribose 5-phosphate. K82 acts as the Schiff-base intermediate with D-ribose 5-phosphate in catalysis. Residue G154 participates in D-ribose 5-phosphate binding. R166 lines the D-glyceraldehyde 3-phosphate pocket. Residues G215 and 236 to 237 each bind D-ribose 5-phosphate; that span reads GS.

Belongs to the PdxS/SNZ family. As to quaternary structure, in the presence of PdxT, forms a dodecamer of heterodimers.

It catalyses the reaction aldehydo-D-ribose 5-phosphate + D-glyceraldehyde 3-phosphate + L-glutamine = pyridoxal 5'-phosphate + L-glutamate + phosphate + 3 H2O + H(+). It functions in the pathway cofactor biosynthesis; pyridoxal 5'-phosphate biosynthesis. Its function is as follows. Catalyzes the formation of pyridoxal 5'-phosphate from ribose 5-phosphate (RBP), glyceraldehyde 3-phosphate (G3P) and ammonia. The ammonia is provided by the PdxT subunit. Can also use ribulose 5-phosphate and dihydroxyacetone phosphate as substrates, resulting from enzyme-catalyzed isomerization of RBP and G3P, respectively. In Bacillus mycoides (strain KBAB4) (Bacillus weihenstephanensis), this protein is Pyridoxal 5'-phosphate synthase subunit PdxS.